Consider the following 589-residue polypeptide: Multidrug transporter FLR2 (589 aa).

The tract at residues 50–116 (KEEMKQDNQT…SSTKDASKPE (67 aa)) is disordered. The segment covering 56–73 (DNQTSTDSMSTSTQQETD) has biased composition (low complexity). N57 is a glycosylation site (N-linked (GlcNAc...) asparagine). The segment covering 107 to 116 (SSTKDASKPE) has biased composition (basic and acidic residues). An N-linked (GlcNAc...) asparagine glycan is attached at N136. The next 12 helical transmembrane spans lie at 143-163 (TFVI…SSIY), 179-199 (VVGT…PIIF), 211-231 (MPLY…CALV), 234-254 (IAGL…VLAT), 275-295 (WAVG…AMVV), 301-321 (WIFW…IFFF), 378-398 (PIIL…YLFF), 417-437 (GLAF…LIIF), 455-475 (LFLI…FFFG), 480-500 (IHWI…FNLF), 516-536 (ASVF…FPLF), and 551-571 (VAWG…IPFV).

It belongs to the major facilitator superfamily.

Its subcellular location is the cell membrane. Its function is as follows. Multidrug transporter that confers resistance to 5-flucytosine (5-FC) and clotrimazole. Further confers azole drug resistance. Plays direct roles in extrusion of 5-flucytosine and clotrimazole. This Candida glabrata (strain ATCC 2001 / BCRC 20586 / JCM 3761 / NBRC 0622 / NRRL Y-65 / CBS 138) (Yeast) protein is Multidrug transporter FLR2.